The sequence spans 151 residues: Regulatory protein RecX (151 aa).

It belongs to the RecX family.

It is found in the cytoplasm. In terms of biological role, modulates RecA activity. The protein is Regulatory protein RecX of Actinobacillus pleuropneumoniae serotype 5b (strain L20).